A 1037-amino-acid chain; its full sequence is Probable inorganic carbon transporter subunit DabA 1 (1037 aa).

Zn(2+)-binding residues include Cys-460, Asp-462, His-719, and Cys-734.

This sequence belongs to the inorganic carbon transporter (TC 9.A.2) DabA family. Forms a complex with DabB. Zn(2+) serves as cofactor.

Its subcellular location is the cell inner membrane. Part of an energy-coupled inorganic carbon pump. In Nitrobacter winogradskyi (strain ATCC 25391 / DSM 10237 / CIP 104748 / NCIMB 11846 / Nb-255), this protein is Probable inorganic carbon transporter subunit DabA 1.